The sequence spans 199 residues: Probable septum site-determining protein MinC (199 aa).

This sequence belongs to the MinC family. As to quaternary structure, interacts with MinD and FtsZ.

Its function is as follows. Cell division inhibitor that blocks the formation of polar Z ring septums. Rapidly oscillates between the poles of the cell to destabilize FtsZ filaments that have formed before they mature into polar Z rings. Prevents FtsZ polymerization. The chain is Probable septum site-determining protein MinC from Persephonella marina (strain DSM 14350 / EX-H1).